Here is a 365-residue protein sequence, read N- to C-terminus: tRNA-specific 2-thiouridylase MnmA (365 aa).

ATP is bound by residues 14–21 and L40; that span reads AMSGGVDS. Catalysis depends on C108, which acts as the Nucleophile. A disulfide bridge connects residues C108 and C204. G132 is an ATP binding site. Residues 154-156 are interaction with tRNA; that stretch reads KDQ. The active-site Cysteine persulfide intermediate is the C204.

Belongs to the MnmA/TRMU family.

It localises to the cytoplasm. It carries out the reaction S-sulfanyl-L-cysteinyl-[protein] + uridine(34) in tRNA + AH2 + ATP = 2-thiouridine(34) in tRNA + L-cysteinyl-[protein] + A + AMP + diphosphate + H(+). Catalyzes the 2-thiolation of uridine at the wobble position (U34) of tRNA, leading to the formation of s(2)U34. This chain is tRNA-specific 2-thiouridylase MnmA, found in Rickettsia peacockii (strain Rustic).